We begin with the raw amino-acid sequence, 113 residues long: ATP-dependent Clp protease adapter protein ClpS (113 aa).

A compositionally biased stretch (pro residues) spans 1-11; that stretch reads MTRPTIPPGPP. Disordered stretches follow at residues 1–24 and 92–113; these read MTRPTIPPGPPGAEGRTQTLERTE and TAHAQREGHPLRVVAEPESEGE.

It belongs to the ClpS family. In terms of assembly, binds to the N-terminal domain of the chaperone ClpA.

Its function is as follows. Involved in the modulation of the specificity of the ClpAP-mediated ATP-dependent protein degradation. This Deinococcus radiodurans (strain ATCC 13939 / DSM 20539 / JCM 16871 / CCUG 27074 / LMG 4051 / NBRC 15346 / NCIMB 9279 / VKM B-1422 / R1) protein is ATP-dependent Clp protease adapter protein ClpS.